The primary structure comprises 364 residues: DNA replication and repair protein RecF (364 aa).

Residue 30-37 (GENAQGKT) participates in ATP binding.

This sequence belongs to the RecF family.

Its subcellular location is the cytoplasm. Functionally, the RecF protein is involved in DNA metabolism; it is required for DNA replication and normal SOS inducibility. RecF binds preferentially to single-stranded, linear DNA. It also seems to bind ATP. The polypeptide is DNA replication and repair protein RecF (Streptococcus suis (strain 98HAH33)).